Reading from the N-terminus, the 515-residue chain is Microtubule-associated protein 70-4 (515 aa).

Coiled-coil stretches lie at residues valine 26 to alanine 106 and leucine 136 to alanine 351. Residues leucine 208–alanine 410 form a required for targeting to microtubules region. Positions aspartate 340–isoleucine 515 are disordered. Residues glutamate 345 to alanine 362 are compositionally biased toward polar residues. Low complexity predominate over residues proline 364 to proline 374. 3 stretches are compositionally biased toward basic and acidic residues: residues alanine 409 to arginine 425, lysine 450 to glutamate 461, and serine 484 to isoleucine 515.

This sequence belongs to the MAP70 family.

It localises to the cytoplasm. The protein localises to the cytoskeleton. In terms of biological role, plant-specific protein that interact with microtubules. In Oryza sativa subsp. japonica (Rice), this protein is Microtubule-associated protein 70-4 (MAP70.4).